Here is a 102-residue protein sequence, read N- to C-terminus: RNA-binding protein Hfq (102 aa).

Residues 9 to 68 (DPFLNALRRERVPVSIYLVNGIKLQGQIESFDQFVILLKNTVSQMVYKHAISTVVPSRPV) form the Sm domain. Residues 63–102 (VPSRPVSHHSNNAGGGTSSNYHHGSSAQNTSAQQDSEETE) are disordered. The span at 70 to 96 (HHSNNAGGGTSSNYHHGSSAQNTSAQQ) shows a compositional bias: polar residues.

It belongs to the Hfq family. Homohexamer.

In terms of biological role, RNA chaperone that binds small regulatory RNA (sRNAs) and mRNAs to facilitate mRNA translational regulation in response to envelope stress, environmental stress and changes in metabolite concentrations. Also binds with high specificity to tRNAs. The protein is RNA-binding protein Hfq of Escherichia fergusonii (strain ATCC 35469 / DSM 13698 / CCUG 18766 / IAM 14443 / JCM 21226 / LMG 7866 / NBRC 102419 / NCTC 12128 / CDC 0568-73).